The chain runs to 327 residues: Xylosidase/arabinosidase 43A (327 aa).

D12 functions as the Proton acceptor in the catalytic mechanism. E228 serves as the catalytic Proton donor.

It belongs to the glycosyl hydrolase 43 family.

It is found in the secreted. It catalyses the reaction Hydrolysis of (1-&gt;4)-beta-D-xylans, to remove successive D-xylose residues from the non-reducing termini.. The enzyme catalyses Hydrolysis of terminal non-reducing alpha-L-arabinofuranoside residues in alpha-L-arabinosides.. Activity is inhibited by Ag(+), Li(+), Pb(2+), Cu(2+), Cr(3+), Co(3+), Fe(3+), Ni(2+), Mg(2+), Zn(2+), EDTA and SDS; but not by Mn(2+), Ca(2+) and beta-mercaptoethanol. Functionally, bifunctional beta-xylosidase/alpha-L-arabinosidases with a low level of xylanase activity. Is most active on 4-nitrophenyl beta-D-xylopyranoside (pNPX) (defined as 100%), moderate on p-nitrophenyl-alpha-L-arabinofuranoside (pNPA) (23.7%), and weak on beechwood xylan (15.9%) and birchwood xylan (15.2%). Is able to attack xylooligosacchardies with degrees of polymerisation of 2-5, releasing the amounts of reducing sugars in the order of xylopentose &gt; xylotetraose &gt; xylotriose &gt; xylobiose, i.e. the rate of xylose released from xylooligosacchardies increased with the chain length. No activity is detected in the presence of carboxymethyl cellulose-sodium (CMC-Na), sugar beet arabinan, AZCL-arabinan (debranched), 4-nitrophenyl a-D - galactopyranoside, 2-nitrophenyl beta-D-galactopyranoside, and 4-nitrophenyl alpha-D-glucopyranoside. This Humicola insolens (Soft-rot fungus) protein is Xylosidase/arabinosidase 43A.